The chain runs to 67 residues: Large ribosomal subunit protein uL30 (67 aa).

This sequence belongs to the universal ribosomal protein uL30 family. As to quaternary structure, part of the 50S ribosomal subunit.

This is Large ribosomal subunit protein uL30 from Thermotoga petrophila (strain ATCC BAA-488 / DSM 13995 / JCM 10881 / RKU-1).